The chain runs to 188 residues: Elongation factor P (188 aa).

The protein belongs to the elongation factor P family.

The protein resides in the cytoplasm. It participates in protein biosynthesis; polypeptide chain elongation. Its function is as follows. Involved in peptide bond synthesis. Stimulates efficient translation and peptide-bond synthesis on native or reconstituted 70S ribosomes in vitro. Probably functions indirectly by altering the affinity of the ribosome for aminoacyl-tRNA, thus increasing their reactivity as acceptors for peptidyl transferase. The protein is Elongation factor P of Wolbachia pipientis subsp. Culex pipiens (strain wPip).